Reading from the N-terminus, the 527-residue chain is GMP synthase [glutamine-hydrolyzing] (527 aa).

In terms of domain architecture, Glutamine amidotransferase type-1 spans 13–202 (TILVLDFGSQ…AVDICGAAQK (190 aa)). Residue Cys-89 is the Nucleophile of the active site. Active-site residues include His-176 and Glu-178. One can recognise a GMPS ATP-PPase domain in the interval 203 to 402 (WSMENFVDTE…MGIPHDLVWR (200 aa)). 231 to 237 (SGGVDST) is a binding site for ATP. The XMP site is built by Arg-304, Asp-464, Lys-519, and Glu-525.

As to quaternary structure, homodimer. Mg(2+) is required as a cofactor.

The protein resides in the cytoplasm. It is found in the cytosol. It catalyses the reaction XMP + L-glutamine + ATP + H2O = GMP + L-glutamate + AMP + diphosphate + 2 H(+). The protein operates within purine metabolism; GMP biosynthesis; GMP from XMP (L-Gln route): step 1/1. In terms of biological role, catalyzes the conversion of xanthine monophosphate (XMP) to GMP in the presence of glutamine and ATP through an adenyl-XMP intermediate. The chain is GMP synthase [glutamine-hydrolyzing] (GUA1) from Yarrowia lipolytica (strain CLIB 122 / E 150) (Yeast).